The sequence spans 264 residues: Thymidylate synthase (264 aa).

Residue arginine 21 participates in dUMP binding. Position 51 (histidine 51) interacts with (6R)-5,10-methylene-5,6,7,8-tetrahydrofolate. DUMP is bound at residue 126-127 (RR). The Nucleophile role is filled by cysteine 146. Residues 166-169 (RSAD), asparagine 177, and 207-209 (HLY) each bind dUMP. Position 169 (aspartate 169) interacts with (6R)-5,10-methylene-5,6,7,8-tetrahydrofolate. Alanine 263 is a (6R)-5,10-methylene-5,6,7,8-tetrahydrofolate binding site.

Belongs to the thymidylate synthase family. Bacterial-type ThyA subfamily. Homodimer.

The protein resides in the cytoplasm. It catalyses the reaction dUMP + (6R)-5,10-methylene-5,6,7,8-tetrahydrofolate = 7,8-dihydrofolate + dTMP. It functions in the pathway pyrimidine metabolism; dTTP biosynthesis. In terms of biological role, catalyzes the reductive methylation of 2'-deoxyuridine-5'-monophosphate (dUMP) to 2'-deoxythymidine-5'-monophosphate (dTMP) while utilizing 5,10-methylenetetrahydrofolate (mTHF) as the methyl donor and reductant in the reaction, yielding dihydrofolate (DHF) as a by-product. This enzymatic reaction provides an intracellular de novo source of dTMP, an essential precursor for DNA biosynthesis. The protein is Thymidylate synthase of Dechloromonas aromatica (strain RCB).